The following is a 623-amino-acid chain: Bifunctional methionine biosynthesis protein MetXA/MetW (623 aa).

Positions methionine 1–serine 17 are enriched in polar residues. The segment at methionine 1–aspartate 30 is disordered. Positions asparagine 77–leucine 385 constitute an AB hydrolase-1 domain. Serine 183 serves as the catalytic Nucleophile. A substrate-binding site is contributed by arginine 253. Active-site residues include aspartate 348 and histidine 381. Aspartate 382 contacts substrate. Residues asparagine 417–histidine 619 form a metW region.

The protein in the N-terminal section; belongs to the AB hydrolase superfamily. MetX family. In the C-terminal section; belongs to the MetW family. In terms of assembly, homodimer.

Its subcellular location is the cytoplasm. It catalyses the reaction L-homoserine + acetyl-CoA = O-acetyl-L-homoserine + CoA. Its pathway is amino-acid biosynthesis; L-methionine biosynthesis via de novo pathway; O-acetyl-L-homoserine from L-homoserine: step 1/1. Transfers an acetyl group from acetyl-CoA to L-homoserine, forming acetyl-L-homoserine. The polypeptide is Bifunctional methionine biosynthesis protein MetXA/MetW (Rhodopirellula baltica (strain DSM 10527 / NCIMB 13988 / SH1)).